Consider the following 213-residue polypeptide: Ras-related protein Rab-2 (213 aa).

GTP contacts are provided by threonine 15, glycine 16, glycine 18, lysine 19, serine 20, cysteine 21, glutamine 32, proline 33, histidine 35, threonine 38, glycine 64, asparagine 119, aspartate 122, and alanine 150. Serine 20 is a binding site for Mg(2+). Threonine 38 contacts Mg(2+). Residues 190–213 (QHSPTNPSLPGAGGAAGAANSGCC) are disordered. 2 S-geranylgeranyl cysteine lipidation sites follow: cysteine 212 and cysteine 213.

This sequence belongs to the small GTPase superfamily. Rab family. Interacts (GTP-bound form) with Vps16A and Vps39; the interaction with Vps39 is probably direct.

The protein localises to the vesicle. It localises to the cytoplasmic vesicle. The protein resides in the cell projection. It is found in the axon. Its subcellular location is the presynapse. The protein localises to the presynaptic active zone. It localises to the golgi apparatus. The protein resides in the trans-Golgi network. It is found in the perikaryon. Its subcellular location is the autophagosome membrane. The protein localises to the autolysosome membrane. It carries out the reaction GTP + H2O = GDP + phosphate + H(+). May be involved in bidirectional endoplasmic reticulum (ER) to Golgi trafficking. Together with Rab7 involved in promoting fusion of autophagosomes and endosomes with lysosomes, probably through recruitment of the HOPS tethering complex. Involved in biosynthetic transport to lysosomes. In larval motor neurons, mediates the biogenesis of presynaptic cargo vesicles and their long-range axonal trafficking to synaptic termini. Not involved in axonal trafficking of mitochondria. During vesicle biogenesis, active zone proteins (including brp/Bruchpilot) and synaptic vesicle proteins (including VGlut) are sorted from the trans-Golgi in a Rab2-dependent manner via, at least, two independent routes. Acts upstream of Arl8 during presynaptic precursor vesicle biogenesis. Associated with lysosomal marker positive presynaptic cargo vesicles during anterograde and retrograde axonal trafficking, probably while in its GTP-bound active state. Involved in the delivery of presynaptic cargos, but not presynapse assembly or active zone function at synaptic termini. Required for autophagocytosis-dependent remodeling of myofibrils and transverse-tubules (T-tubules) during metamorphosis. This Drosophila melanogaster (Fruit fly) protein is Ras-related protein Rab-2.